Reading from the N-terminus, the 53-residue chain is Large ribosomal subunit protein bL32 (53 aa).

Positions 1 to 27 (MAVQQNKKSRSRRDMRRSHDALTTAAV) are disordered. The segment covering 7–16 (KKSRSRRDMR) has biased composition (basic residues).

Belongs to the bacterial ribosomal protein bL32 family.

This Glaesserella parasuis serovar 5 (strain SH0165) (Haemophilus parasuis) protein is Large ribosomal subunit protein bL32.